A 264-amino-acid polypeptide reads, in one-letter code: DNA-directed RNA polymerase subunit Rpo3 (264 aa).

Cysteine 203, cysteine 206, and cysteine 209 together coordinate [3Fe-4S] cluster.

This sequence belongs to the archaeal Rpo3/eukaryotic RPB3 RNA polymerase subunit family. Part of the RNA polymerase complex. [3Fe-4S] cluster serves as cofactor.

It is found in the cytoplasm. The catalysed reaction is RNA(n) + a ribonucleoside 5'-triphosphate = RNA(n+1) + diphosphate. Its function is as follows. DNA-dependent RNA polymerase (RNAP) catalyzes the transcription of DNA into RNA using the four ribonucleoside triphosphates as substrates. This is DNA-directed RNA polymerase subunit Rpo3 from Methanothermobacter thermautotrophicus (strain ATCC 29096 / DSM 1053 / JCM 10044 / NBRC 100330 / Delta H) (Methanobacterium thermoautotrophicum).